The chain runs to 141 residues: Large ribosomal subunit protein uL11 (141 aa).

It belongs to the universal ribosomal protein uL11 family. In terms of assembly, part of the ribosomal stalk of the 50S ribosomal subunit. Interacts with L10 and the large rRNA to form the base of the stalk. L10 forms an elongated spine to which L12 dimers bind in a sequential fashion forming a multimeric L10(L12)X complex. In terms of processing, one or more lysine residues are methylated.

In terms of biological role, forms part of the ribosomal stalk which helps the ribosome interact with GTP-bound translation factors. The sequence is that of Large ribosomal subunit protein uL11 from Fervidobacterium nodosum (strain ATCC 35602 / DSM 5306 / Rt17-B1).